Here is a 247-residue protein sequence, read N- to C-terminus: TLC domain-containing protein 1 (247 aa).

Positions 1-35 (MPRLLHPALPLLLGATLTFRALRRALCRLPLPVHV) are cleaved as a signal peptide. Residues 36 to 46 (RADPLRTWRWH) are Extracellular-facing. In terms of domain architecture, TLC spans 40-234 (LRTWRWHNLL…LLRSDFCPEH (195 aa)). A helical membrane pass occupies residues 47–67 (NLLVSFAHSIVSGIWALLCVW). The Cytoplasmic segment spans residues 68-83 (QTPDMLVEIETAWSLS). The helical transmembrane segment at 84 to 104 (GYLLVCFSAGYFIHDTVDIVA) threads the bilayer. The Extracellular segment spans residues 105–123 (SGQTRASWEYLVHHVMAMG). Positions 124–144 (AFFSGIFWSSFVGGGVLTLLV) form an intramembrane region, helical. Residues 145–173 (EVSNIFLTIRMMMKISNAQDHLLYRVNKY) are Extracellular-facing. Residues 174-194 (VNLVMYFLFRLAPQAYLTHFF) form a helical membrane-spanning segment. The Cytoplasmic segment spans residues 195–201 (LRYVNQR). Residues 202 to 222 (TLGTFLLGILLMLDVMIIIYF) traverse the membrane as a helical segment. At 223–247 (SRLLRSDFCPEHVPKKQHKDKFLTE) the chain is on the extracellular side.

It is found in the cell membrane. In terms of biological role, regulates the composition and fluidity of the plasma membrane. Inhibits the incorporation of membrane-fluidizing phospholipids containing omega-3 long-chain polyunsaturated fatty acids (LCPUFA) and thereby promotes membrane rigidity. Does not appear to have any effect on LCPUFA synthesis. The protein is TLC domain-containing protein 1 (TLCD1) of Homo sapiens (Human).